The sequence spans 952 residues: Inactive atromentin synthetase invA6 (952 aa).

The adenylation (A) domain stretch occupies residues 58–462 (DSSVQTRSFS…NGRIKDTVIV (405 aa)). A Carrier domain is found at 594–672 (APSTETEKTL…SLAKYVDSLV (79 aa)). Positions 599-669 (TEKTLGRLYA…VISSLAKYVD (71 aa)) are thiolation and peptide carrier (T) domain. O-(pantetheine 4'-phosphoryl)serine is present on S631. Residues 695-939 (PIFMVHPGIG…LMDFDHVSGF (245 aa)) are thioesterase (TE) domain.

Belongs to the ATP-dependent AMP-binding enzyme family.

Its function is as follows. Inactive atromentin synthetase homolog. Does not accept 4-hydroxyphenylpyruvate (4-HPP) as substrate. Both the adenylation (A) and the thioesterase (TE) domain of the invA6 enzyme are inactive. This is Inactive atromentin synthetase invA6 (invA6) from Paxillus involutus (Naked brimcap).